The sequence spans 471 residues: Probable ribonuclease FAU-1 (471 aa).

Residues 93-139 enclose the S1 motif domain; the sequence is GAVFDAAVDHTVGGGAILDLGDDREAYLPFGAVDDHVTDGDTLRVAI.

It belongs to the FAU-1 family.

Its function is as follows. Probable RNase involved in rRNA stability through maturation and/or degradation of precursor rRNAs. Binds to RNA in loop regions with AU-rich sequences. This is Probable ribonuclease FAU-1 from Halobacterium salinarum (strain ATCC 29341 / DSM 671 / R1).